We begin with the raw amino-acid sequence, 134 residues long: Phosphoribosyl-AMP cyclohydrolase (134 aa).

A Mg(2+)-binding site is contributed by aspartate 77. Cysteine 78 contacts Zn(2+). Mg(2+)-binding residues include aspartate 79 and aspartate 81. Cysteine 95 and cysteine 102 together coordinate Zn(2+).

The protein belongs to the PRA-CH family. In terms of assembly, homodimer. The cofactor is Mg(2+). Requires Zn(2+) as cofactor.

The protein resides in the cytoplasm. The catalysed reaction is 1-(5-phospho-beta-D-ribosyl)-5'-AMP + H2O = 1-(5-phospho-beta-D-ribosyl)-5-[(5-phospho-beta-D-ribosylamino)methylideneamino]imidazole-4-carboxamide. It participates in amino-acid biosynthesis; L-histidine biosynthesis; L-histidine from 5-phospho-alpha-D-ribose 1-diphosphate: step 3/9. Its function is as follows. Catalyzes the hydrolysis of the adenine ring of phosphoribosyl-AMP. The chain is Phosphoribosyl-AMP cyclohydrolase from Pseudomonas aeruginosa (strain LESB58).